Consider the following 83-residue polypeptide: Keratin-associated protein 21-2 (83 aa).

Interacts with hair keratins.

Functionally, in the hair cortex, hair keratin intermediate filaments are embedded in an interfilamentous matrix, consisting of hair keratin-associated proteins (KRTAP), which are essential for the formation of a rigid and resistant hair shaft through their extensive disulfide bond cross-linking with abundant cysteine residues of hair keratins. The matrix proteins include the high-sulfur and high-glycine-tyrosine keratins. This chain is Keratin-associated protein 21-2 (KRTAP21-2), found in Homo sapiens (Human).